The following is a 111-amino-acid chain: Dynein light chain Tctex-type (111 aa).

Belongs to the dynein light chain Tctex-type family. In terms of assembly, the cytoplasmic dynein complex consists of two catalytic heavy chains (HCs) and a number of non-catalytic subunits presented by intermediate chains (ICs), light intermediate chains (LICs) and light chains (LCs).

The protein resides in the cytoplasm. The protein localises to the cytoskeleton. Its function is as follows. Acts as one of several non-catalytic accessory components of the cytoplasmic dynein complex that are thought to be involved in linking dynein to cargos and to adapter proteins that regulate dynein function. Cytoplasmic dynein acts as a motor for the intracellular retrograde motility of vesicles and organelles along microtubules. Required for spermatid differentiation. Is not required for polarized transport in rhabdomere development and appears to be a non-essential component of the cytoplasmic dynein complex. The chain is Dynein light chain Tctex-type (Dlc90F) from Drosophila melanogaster (Fruit fly).